A 120-amino-acid polypeptide reads, in one-letter code: MHEASIALALIDVAGDVLREHGAARASALTVRVGQWSSVVPEALAAAFPACAEGTPLAGARLSIERVPGVGECPQHGPVELEVWRGLRCPLCGAPTPRLLQGDELELDQLELDQLELENL.

A Ni(2+)-binding site is contributed by histidine 2. The Zn(2+) site is built by cysteine 73, histidine 76, cysteine 89, and cysteine 92.

This sequence belongs to the HypA/HybF family.

In terms of biological role, involved in the maturation of [NiFe] hydrogenases. Required for nickel insertion into the metal center of the hydrogenase. In Deinococcus radiodurans (strain ATCC 13939 / DSM 20539 / JCM 16871 / CCUG 27074 / LMG 4051 / NBRC 15346 / NCIMB 9279 / VKM B-1422 / R1), this protein is Hydrogenase maturation factor HypA.